A 135-amino-acid chain; its full sequence is Snaclec rhodocetin subunit gamma (135 aa).

3 cysteine pairs are disulfide-bonded: Cys-4-Cys-15, Cys-32-Cys-129, and Cys-104-Cys-121. The 120-residue stretch at 11–130 (YDQHCYQAFN…CQAKNPFVCK (120 aa)) folds into the C-type lectin domain.

It belongs to the snaclec family. In terms of assembly, heterotetramer of subunit alpha, beta, gamma and delta; only the gamma and the delta subunits are disulfide-linked. Alpha-beta heterodimer and gamma-delta heterodimer associate orthogonally, giving a cruciform conformation. This heterotetramer may covalently dimerizes thanks to the gamma subunit. In terms of tissue distribution, expressed by the venom gland.

The protein resides in the secreted. In terms of biological role, potent inhibitor of collagen-induced platelet aggregation. It acts by binding to the integrin alpha2A domain and blocks collagen binding to integrin alpha-2/beta-1 (ITGA2/ITGB1). The gamma/delta subunits mainly contribute to this activity. This chain is Snaclec rhodocetin subunit gamma, found in Calloselasma rhodostoma (Malayan pit viper).